A 411-amino-acid chain; its full sequence is Translation initiation factor 2 subunit gamma (411 aa).

Residues 9–203 form the tr-type G domain; the sequence is QAEVNIGMVG…AIEDFIPTPK (195 aa). The G1 stretch occupies residues 18 to 25; sequence GHVDHGKT. Residues D21, T25, G46, and T48 each contribute to the Mg(2+) site. GTP is bound at residue 21–26; that stretch reads DHGKTT. The G2 stretch occupies residues 46 to 50; it reads GITIK. C61, C64, C73, and C76 together coordinate Zn(2+). Residues 90–93 are G3; the sequence is DAPG. GTP is bound by residues 146-149 and 181-183; these read NKIE and SAL. The segment at 146–149 is G4; that stretch reads NKIE. The segment at 181–183 is G5; the sequence is SAL.

It belongs to the TRAFAC class translation factor GTPase superfamily. Classic translation factor GTPase family. EIF2G subfamily. Heterotrimer composed of an alpha, a beta and a gamma chain. Requires Mg(2+) as cofactor.

It catalyses the reaction GTP + H2O = GDP + phosphate + H(+). In terms of biological role, eIF-2 functions in the early steps of protein synthesis by forming a ternary complex with GTP and initiator tRNA. The sequence is that of Translation initiation factor 2 subunit gamma from Pyrococcus abyssi (strain GE5 / Orsay).